Consider the following 107-residue polypeptide: Protein Rev (107 aa).

At S5 the chain carries Phosphoserine; by host CK2. Positions 18-26 (AIKILYQSN) are homomultimerization. Disordered stretches follow at residues 24–48 (QSNP…WRAR) and 82–107 (HLDC…VGRS). Positions 34–50 (TRQARRNRRRRWRARQR) match the Nuclear localization signal and RNA-binding (RRE) motif. Residues 36-48 (QARRNRRRRWRAR) show a composition bias toward basic residues. The short motif at 73–84 (LQLPPLERLHLD) is the Nuclear export signal and binding to XPO1 element. The segment covering 88 to 101 (DSGTSGTQQPQGTE) has biased composition (polar residues). A Phosphoserine; by host modification is found at S92.

It belongs to the HIV-1 REV protein family. As to quaternary structure, homomultimer; when bound to the RRE. Multimeric assembly is essential for activity and may involve XPO1. Binds to human KPNB1, XPO1, TNPO1, RANBP5 and IPO7. Interacts with the viral Integrase. Interacts with human KHDRBS1. Interacts with human NAP1; this interaction decreases Rev multimerization and stimulates its activity. Interacts with human DEAD-box helicases DDX3 and DDX24; these interactions may serve for viral RNA export to the cytoplasm and packaging, respectively. Interacts with human PSIP1; this interaction may inhibit HIV-1 DNA integration by promoting dissociation of the Integrase-LEDGF/p75 complex. In terms of processing, asymmetrically arginine dimethylated at one site by host PRMT6. Methylation impairs the RNA-binding activity and export of viral RNA from the nucleus to the cytoplasm. Post-translationally, phosphorylated by protein kinase CK2. Presence of, and maybe binding to the N-terminus of the regulatory beta subunit of CK2 is necessary for CK2-mediated Rev's phosphorylation.

It localises to the host nucleus. The protein resides in the host nucleolus. It is found in the host cytoplasm. Its function is as follows. Escorts unspliced or incompletely spliced viral pre-mRNAs (late transcripts) out of the nucleus of infected cells. These pre-mRNAs carry a recognition sequence called Rev responsive element (RRE) located in the env gene, that is not present in fully spliced viral mRNAs (early transcripts). This function is essential since most viral proteins are translated from unspliced or partially spliced pre-mRNAs which cannot exit the nucleus by the pathway used by fully processed cellular mRNAs. Rev itself is translated from a fully spliced mRNA that readily exits the nucleus. Rev's nuclear localization signal (NLS) binds directly to KPNB1/Importin beta-1 without previous binding to KPNA1/Importin alpha-1. KPNB1 binds to the GDP bound form of RAN (Ran-GDP) and targets Rev to the nucleus. In the nucleus, the conversion from Ran-GDP to Ran-GTP dissociates Rev from KPNB1 and allows Rev's binding to the RRE in viral pre-mRNAs. Rev multimerization on the RRE via cooperative assembly exposes its nuclear export signal (NES) to the surface. Rev can then form a complex with XPO1/CRM1 and Ran-GTP, leading to nuclear export of the complex. Conversion from Ran-GTP to Ran-GDP mediates dissociation of the Rev/RRE/XPO1/RAN complex, so that Rev can return to the nucleus for a subsequent round of export. Beside KPNB1, also seems to interact with TNPO1/Transportin-1, RANBP5/IPO5 and IPO7/RANBP7 for nuclear import. The nucleoporin-like HRB/RIP is an essential cofactor that probably indirectly interacts with Rev to release HIV RNAs from the perinuclear region to the cytoplasm. This is Protein Rev from Human immunodeficiency virus type 1 group M subtype G (isolate SE6165) (HIV-1).